Reading from the N-terminus, the 313-residue chain is GTP cyclohydrolase 1 (313 aa).

Residues 1–10 show a composition bias toward basic and acidic residues; sequence MAQETTRDGS. The interval 1 to 120 is disordered; the sequence is MAQETTRDGS…SRGTRERLEE (120 aa). Residues 11–20 show a composition bias toward low complexity; sequence DSPSGSVSPP. Positions 29–39 are enriched in basic residues; sequence KDKKSSKKRAH. Basic and acidic residues predominate over residues 40-64; the sequence is SSGERRSSVSKPARDPSDKPEESPS. The segment covering 72 to 102 has biased composition (low complexity); that stretch reads TSSTAAAAVPSTITEEVSPSTSVTRSPSPVI. Cys-202, His-205, and Cys-273 together coordinate Zn(2+).

Belongs to the GTP cyclohydrolase I family. Toroid-shaped homodecamer, composed of two pentamers of five dimers.

The catalysed reaction is GTP + H2O = 7,8-dihydroneopterin 3'-triphosphate + formate + H(+). The protein operates within cofactor biosynthesis; 7,8-dihydroneopterin triphosphate biosynthesis; 7,8-dihydroneopterin triphosphate from GTP: step 1/1. Its activity is regulated as follows. GTP shows a positive allosteric effect, and tetrahydrobiopterin inhibits the enzyme activity. Functionally, GTP cyclohydrolase 1 is the first enzyme in the biosynthetic pathway leading to folic acid. The chain is GTP cyclohydrolase 1 (gch-1) from Neurospora crassa (strain ATCC 24698 / 74-OR23-1A / CBS 708.71 / DSM 1257 / FGSC 987).